A 1391-amino-acid chain; its full sequence is Leucine-rich PPR motif-containing protein, mitochondrial (1391 aa).

The N-terminal 42 residues, 1 to 42 (MSALLAGARFLLRPGLRALPAPCVRLSPGQGRYLNNTPGHFA), are a transit peptide targeting the mitochondrion. 15 PPR repeats span residues 110–144 (LLRSCGSLLPELQMSERTEMAHRIWEKLQELGAVF), 145–179 (DVSHYNALLKVYLQNEHKFSPTEYLAKMEAANVQP), 180–214 (NRVTYQRLIAAYCNEGDIEGASKILGFMKNKDLPI), 215–249 (TEAVFNTLVTGHARAGDMENAKNILSVMRSAGIEP), 250–284 (GPETYVALLTAYAEKGDINNIKQTLENVEKNEGSL), 389–425 (NLHSAPLQFALYCSLDAKKADLALELMKMMKQEGMPV), 704–738 (AIGTYAALIQLCCRHDNPDEALNLKQELNRKDSSA), 741–775 (DTSKYLALVKVFGKNGRIADAINVLKEMKEKDVPL), 779–813 (TTTSFFHILNAAALRGDAETVDKIHESIVTLGLAK), 815–850 (TSNLCSPLVSVHLEKGDLPAAMETLFTCSKKYNCMP), 948–982 (RDDMYYYLLKLCKENDDWKKADSAWTKIQEENVIP), 1028–1062 (PESSFQKRVQVLSKKNRAKDAYEAFMEGENNGTAM), 1063–1093 (SASAYSSLIRSMLSEGMLEEAKKVLNTAENH), 1100–1134 (NDAASSLLIITQVRRDYLKDALASLKAMLEGDKVP), and 1310–1344 (RETAYSYLMKCYATDKDATAATALYEKMKSESVSP). An RNA-binding region spans residues 1118-1387 (KDALASLKAM…KLKKDKADSY (270 aa)).

It is found in the mitochondrion. It localises to the nucleus. Its function is as follows. May play a role in RNA metabolism in both nuclei and mitochondria. May bind mature mRNA in the nucleus outer membrane. In mitochondria binds to poly(A) mRNA. May be involved in transcription regulation. Binds single-stranded DNA. This Xenopus tropicalis (Western clawed frog) protein is Leucine-rich PPR motif-containing protein, mitochondrial (lrpprc).